A 379-amino-acid polypeptide reads, in one-letter code: Galactose-1-phosphate uridylyltransferase (379 aa).

Over residues 1 to 10 (MSHSGADPEQ) the composition is skewed to basic and acidic residues. Residues 1 to 20 (MSHSGADPEQRQQASEADAM) are disordered. C75 contacts Zn(2+). UDP-alpha-D-glucose is bound by residues A81, 97–98 (ND), and N173. H184 serves as a coordination point for Zn(2+). H186 serves as the catalytic Tele-UMP-histidine intermediate. Position 188 (Q188) interacts with UDP-alpha-D-glucose. Residues E202, H301, H319, and H321 each contribute to the Zn(2+) site. UDP-alpha-D-glucose contacts are provided by residues 334 to 337 (KFMV) and 339 to 340 (YE).

This sequence belongs to the galactose-1-phosphate uridylyltransferase type 1 family. Homodimer. The cofactor is Zn(2+).

It catalyses the reaction alpha-D-galactose 1-phosphate + UDP-alpha-D-glucose = alpha-D-glucose 1-phosphate + UDP-alpha-D-galactose. It participates in carbohydrate metabolism; galactose metabolism. In terms of biological role, plays an important role in galactose metabolism. This Mus musculus (Mouse) protein is Galactose-1-phosphate uridylyltransferase (Galt).